A 287-amino-acid polypeptide reads, in one-letter code: Large ribosomal subunit protein uL2 (287 aa).

A disordered region spans residues 221 to 287; sequence RGSVMNPCDH…SKRSRGGRDS (67 aa). Residues 258–287 show a composition bias toward basic residues; it reads KTRKRNKPSNRFVLRKRRRVSKRSRGGRDS.

Belongs to the universal ribosomal protein uL2 family. In terms of assembly, part of the 50S ribosomal subunit. Forms a bridge to the 30S subunit in the 70S ribosome.

Its function is as follows. One of the primary rRNA binding proteins. Required for association of the 30S and 50S subunits to form the 70S ribosome, for tRNA binding and peptide bond formation. It has been suggested to have peptidyltransferase activity; this is somewhat controversial. Makes several contacts with the 16S rRNA in the 70S ribosome. The chain is Large ribosomal subunit protein uL2 from Prochlorococcus marinus (strain MIT 9211).